We begin with the raw amino-acid sequence, 610 residues long: Glutamine--fructose-6-phosphate aminotransferase [isomerizing] (610 aa).

The Nucleophile; for GATase activity role is filled by Cys-2. Residues 2–221 enclose the Glutamine amidotransferase type-2 domain; it reads CGIVGAVAQR…DGDVVDLQLA (220 aa). 2 SIS domains span residues 286–426 and 459–600; these read AYKV…TRGR and WADR…VDKP. The active-site For Fru-6P isomerization activity is Lys-605.

Homodimer.

It localises to the cytoplasm. It carries out the reaction D-fructose 6-phosphate + L-glutamine = D-glucosamine 6-phosphate + L-glutamate. In terms of biological role, catalyzes the first step in hexosamine metabolism, converting fructose-6P into glucosamine-6P using glutamine as a nitrogen source. This is Glutamine--fructose-6-phosphate aminotransferase [isomerizing] from Bordetella bronchiseptica (strain ATCC BAA-588 / NCTC 13252 / RB50) (Alcaligenes bronchisepticus).